Consider the following 336-residue polypeptide: Dihydroorotate dehydrogenase (quinone) (336 aa).

FMN-binding positions include 62 to 66 and T86; that span reads AGLEK. Position 66 (K66) interacts with substrate. 111 to 115 provides a ligand contact to substrate; that stretch reads NRMGF. Positions 139 and 172 each coordinate FMN. Position 172 (N172) interacts with substrate. The Nucleophile role is filled by S175. N177 is a binding site for substrate. FMN contacts are provided by K217 and T245. Residue 246-247 participates in substrate binding; sequence NT. FMN-binding positions include G268, G297, and 318 to 319; that span reads YS.

This sequence belongs to the dihydroorotate dehydrogenase family. Type 2 subfamily. As to quaternary structure, monomer. FMN serves as cofactor.

The protein localises to the cell membrane. It catalyses the reaction (S)-dihydroorotate + a quinone = orotate + a quinol. Its pathway is pyrimidine metabolism; UMP biosynthesis via de novo pathway; orotate from (S)-dihydroorotate (quinone route): step 1/1. Functionally, catalyzes the conversion of dihydroorotate to orotate with quinone as electron acceptor. The chain is Dihydroorotate dehydrogenase (quinone) from Aliivibrio salmonicida (strain LFI1238) (Vibrio salmonicida (strain LFI1238)).